The chain runs to 298 residues: MAWLQATIDSDSAVAERLADALMDAGALSTAIEDAWAGTDKEQPIFGEPGEPVDQLWSQSRIITLFDESADVALLIAAAANACQLAMPAYSVERVEEQDWVRLTQSQFEPIRISDRLWITPTWHEAPAPNAVNLQLDPGLAFGTGSHPTTRLCLQWLDKQLQGNESVLDYGCGSGILAIAALKLGAASAVGIDIDQQAVRASQDNAEQNGVKADFFLPNANPAAQYDVVLANILANPLRMLGDLLASHVKTGGRIVLSGILAEQADELSAIYSQWFEMDPPVFDEGWTRLTGTRRAAV.

Residues T150, G171, D193, and N232 each contribute to the S-adenosyl-L-methionine site.

This sequence belongs to the methyltransferase superfamily. PrmA family.

The protein resides in the cytoplasm. The catalysed reaction is L-lysyl-[protein] + 3 S-adenosyl-L-methionine = N(6),N(6),N(6)-trimethyl-L-lysyl-[protein] + 3 S-adenosyl-L-homocysteine + 3 H(+). In terms of biological role, methylates ribosomal protein L11. The sequence is that of Ribosomal protein L11 methyltransferase from Chromobacterium violaceum (strain ATCC 12472 / DSM 30191 / JCM 1249 / CCUG 213 / NBRC 12614 / NCIMB 9131 / NCTC 9757 / MK).